A 50-amino-acid chain; its full sequence is Phospholipase A2 trimorphin (50 aa).

Ca(2+) contacts are provided by Y28, G30, and G32. Cysteines 29 and 45 form a disulfide. H48 is a catalytic residue. A Ca(2+)-binding site is contributed by D49.

The cofactor is Ca(2+). In terms of tissue distribution, expressed by the venom gland.

The protein resides in the secreted. The catalysed reaction is a 1,2-diacyl-sn-glycero-3-phosphocholine + H2O = a 1-acyl-sn-glycero-3-phosphocholine + a fatty acid + H(+). Its activity is regulated as follows. Inhibited by EDTA. Functionally, PLA2 catalyzes the calcium-dependent hydrolysis of the 2-acyl groups in 3-sn-phosphoglycerides. In Trimorphodon lambda (Sonoran lyre snake), this protein is Phospholipase A2 trimorphin.